Reading from the N-terminus, the 39-residue chain is uncharacterized protein (39 aa).

Positions 1 to 16 (MLNIQPTQSIVNNQPK) are enriched in polar residues. The segment at 1–39 (MLNIQPTQSIVNNQPKSDQKKQKPADLLKEFYDKTGNRN) is disordered. Over residues 17–39 (SDQKKQKPADLLKEFYDKTGNRN) the composition is skewed to basic and acidic residues.

This is an uncharacterized protein from Dictyostelium discoideum (Social amoeba).